A 505-amino-acid polypeptide reads, in one-letter code: ATP synthase subunit alpha (505 aa).

171-178 (GDRQTGKT) provides a ligand contact to ATP.

The protein belongs to the ATPase alpha/beta chains family. F-type ATPases have 2 components, CF(1) - the catalytic core - and CF(0) - the membrane proton channel. CF(1) has five subunits: alpha(3), beta(3), gamma(1), delta(1), epsilon(1). CF(0) has three main subunits: a(1), b(2) and c(9-12). The alpha and beta chains form an alternating ring which encloses part of the gamma chain. CF(1) is attached to CF(0) by a central stalk formed by the gamma and epsilon chains, while a peripheral stalk is formed by the delta and b chains.

It localises to the cell inner membrane. It catalyses the reaction ATP + H2O + 4 H(+)(in) = ADP + phosphate + 5 H(+)(out). Its function is as follows. Produces ATP from ADP in the presence of a proton gradient across the membrane. The alpha chain is a regulatory subunit. This is ATP synthase subunit alpha from Aliarcobacter butzleri (strain RM4018) (Arcobacter butzleri).